Reading from the N-terminus, the 207-residue chain is Protein YABBY 6 (207 aa).

A C4-type zinc finger spans residues Cys-16–Cys-43.

The protein belongs to the YABBY family. In terms of tissue distribution, expressed in leaf blades, leaf sheaths and flowers.

The protein resides in the nucleus. The chain is Protein YABBY 6 (YAB6) from Oryza sativa subsp. japonica (Rice).